Reading from the N-terminus, the 156-residue chain is SsrA-binding protein (156 aa).

The protein belongs to the SmpB family.

The protein resides in the cytoplasm. Required for rescue of stalled ribosomes mediated by trans-translation. Binds to transfer-messenger RNA (tmRNA), required for stable association of tmRNA with ribosomes. tmRNA and SmpB together mimic tRNA shape, replacing the anticodon stem-loop with SmpB. tmRNA is encoded by the ssrA gene; the 2 termini fold to resemble tRNA(Ala) and it encodes a 'tag peptide', a short internal open reading frame. During trans-translation Ala-aminoacylated tmRNA acts like a tRNA, entering the A-site of stalled ribosomes, displacing the stalled mRNA. The ribosome then switches to translate the ORF on the tmRNA; the nascent peptide is terminated with the 'tag peptide' encoded by the tmRNA and targeted for degradation. The ribosome is freed to recommence translation, which seems to be the essential function of trans-translation. The protein is SsrA-binding protein of Maricaulis maris (strain MCS10) (Caulobacter maris).